Here is a 571-residue protein sequence, read N- to C-terminus: MYYMLIGFIIVVIAIISAGYILKRKHYQRINELEETKIKLRERPVIDELSKVKKLKLTGQTEALFESWRSSWDEIETRLFPDLEEVLLEAEMNTDRYKFRSATYVENDIEQMLVVIEKQMDQILGGLKELLISEEKNAKESRMTKEKFAELRREVLTRGFKLGDTLPYVETKLDELAENLNRYDLLTDQGDHLEAREIVLIVQKEMKVIEAQMERIPSLLHETDTILPEEMNKLRAGYEEMVRKGYYLAQMELDKEITRMKTQIDKMKRNVINLDLDEAEQGIEELHNEIDLFYDTLEHEAEARHFVKENHSPTSDKLQRQNTVSDALAEQITEVKQTYHVAEDDLAVYLKTSAKLSEAKENFEQLTALIASGEIAYSAAQDTLKEIDAALISIGAEQDKFAEELRSLRKDELEARDDAERMRRAIVTLDRKMERERLPGLPEEYLSLREHMGESIDALEKRLEEKPLNMKAVTQDWRIAEEDLNHLTEKAEEMMENVRLVEHVIQYANRYRLRNKELADELVQAENHFYNDYQYKKALEIAVTALEKVETGAFKKVEKAYESKVSVDDIE.

Residues 1–3 lie on the Extracellular side of the membrane; sequence MYY. Residues 4 to 22 form a helical membrane-spanning segment; it reads MLIGFIIVVIAIISAGYIL. The Cytoplasmic segment spans residues 23–571; it reads KRKHYQRINE…ESKVSVDDIE (549 aa). Coiled-coil stretches lie at residues 169-214, 249-298, 326-374, 400-438, and 474-529; these read VETK…AQME, AQME…DTLE, DALA…ASGE, KFAE…RERL, and TQDW…ENHF.

It belongs to the EzrA family.

The protein localises to the cell membrane. In terms of biological role, negative regulator of FtsZ ring formation; modulates the frequency and position of FtsZ ring formation. Inhibits FtsZ ring formation at polar sites. Interacts either with FtsZ or with one of its binding partners to promote depolymerization. In Listeria welshimeri serovar 6b (strain ATCC 35897 / DSM 20650 / CCUG 15529 / CIP 8149 / NCTC 11857 / SLCC 5334 / V8), this protein is Septation ring formation regulator EzrA.